We begin with the raw amino-acid sequence, 417 residues long: Pre-mRNA-splicing factor PRP46 (417 aa).

WD repeat units lie at residues Ala119 to Thr159, Gly162 to Gly201, Gly209 to Val248, Gly251 to Ala290, His293 to Gly334, Gly337 to Ser376, and Ser385 to Glu417.

This sequence belongs to the WD repeat PRL1/PRL2 family. In terms of assembly, associated with the spliceosome.

Its subcellular location is the cytoplasm. The protein resides in the nucleus. Its function is as follows. Involved in pre-mRNA splicing and required for cell cycle progression at G2/M. This Debaryomyces hansenii (strain ATCC 36239 / CBS 767 / BCRC 21394 / JCM 1990 / NBRC 0083 / IGC 2968) (Yeast) protein is Pre-mRNA-splicing factor PRP46 (PRP46).